Consider the following 218-residue polypeptide: Phosphatidylserine decarboxylase proenzyme (218 aa).

Ser183 serves as the catalytic Schiff-base intermediate with substrate; via pyruvic acid. Position 183 is a pyruvic acid (Ser); by autocatalysis (Ser183).

The protein belongs to the phosphatidylserine decarboxylase family. PSD-A subfamily. In terms of assembly, heterodimer of a large membrane-associated beta subunit and a small pyruvoyl-containing alpha subunit. The cofactor is pyruvate. In terms of processing, is synthesized initially as an inactive proenzyme. Formation of the active enzyme involves a self-maturation process in which the active site pyruvoyl group is generated from an internal serine residue via an autocatalytic post-translational modification. Two non-identical subunits are generated from the proenzyme in this reaction, and the pyruvate is formed at the N-terminus of the alpha chain, which is derived from the carboxyl end of the proenzyme. The post-translation cleavage follows an unusual pathway, termed non-hydrolytic serinolysis, in which the side chain hydroxyl group of the serine supplies its oxygen atom to form the C-terminus of the beta chain, while the remainder of the serine residue undergoes an oxidative deamination to produce ammonia and the pyruvoyl prosthetic group on the alpha chain.

It is found in the cell membrane. The catalysed reaction is a 1,2-diacyl-sn-glycero-3-phospho-L-serine + H(+) = a 1,2-diacyl-sn-glycero-3-phosphoethanolamine + CO2. The protein operates within phospholipid metabolism; phosphatidylethanolamine biosynthesis; phosphatidylethanolamine from CDP-diacylglycerol: step 2/2. Functionally, catalyzes the formation of phosphatidylethanolamine (PtdEtn) from phosphatidylserine (PtdSer). This is Phosphatidylserine decarboxylase proenzyme from Magnetococcus marinus (strain ATCC BAA-1437 / JCM 17883 / MC-1).